We begin with the raw amino-acid sequence, 351 residues long: Cytoplasmic dynein 2 light intermediate chain 1 (351 aa).

Positions 304-335 are disordered; it reads TLKAIQDPARDPQYAESEVDEMRVQKDQELEQ. Over residues 323 to 335 the composition is skewed to basic and acidic residues; sequence DEMRVQKDQELEQ.

This sequence belongs to the dynein light intermediate chain family. As to quaternary structure, light intermediate chain of the cytoplasmic dynein complex 2, a multisubunit complex composed at least of eleven different proteins. The cytoplasmic dynein 2 complex consists of two catalytic heavy chains (HCs) and a number of non-catalytic subunits presented by intermediate chains (ICs), light intermediate chains (LICs) and light chains (LCs). Among them, a heavy chain (DYNC2H1), two intermediate chains (DYNC2I2 and DYNC2I1), a light intermediate chain (DYNC2LI1), and a light chain (DYNLT2B) are unique to the dynein-2 complex, but a subset of light chains are also shared by dynein-1 and dynein-2 complexes. Dynein-2 complex is built around two copies of cytoplasmic dynein 2 heavy chain 1 (DYNC2H1). The C-terminal region forms the motor domain, which converts the energy from ATP hydrolysis into movement. Its N-terminal region forms the tail, an extended structure that binds the other subunits and holds the two heavy chains in a homodimer. Interacts with DYNC2H1 (via N-terminus); this interaction stabilizes the dynein-2 complex structure.

Its subcellular location is the cytoplasm. The protein localises to the cell projection. The protein resides in the cilium. It localises to the cytoskeleton. It is found in the cilium basal body. Its subcellular location is the cilium axoneme. The protein localises to the microtubule organizing center. The protein resides in the centrosome. Its function is as follows. Acts as one of several non-catalytic accessory components of the cytoplasmic dynein 2 complex (dynein-2 complex), a motor protein complex that drives the movement of cargos along microtubules within cilia and flagella in concert with the intraflagellar transport (IFT) system, facilitating the assembly of these organelles. Involved in the regulation of ciliary length. The sequence is that of Cytoplasmic dynein 2 light intermediate chain 1 (Dync2li1) from Rattus norvegicus (Rat).